A 316-amino-acid chain; its full sequence is tRNA pseudouridine synthase B (316 aa).

Asp-47 functions as the Nucleophile in the catalytic mechanism.

It belongs to the pseudouridine synthase TruB family. Type 1 subfamily.

It catalyses the reaction uridine(55) in tRNA = pseudouridine(55) in tRNA. Its function is as follows. Responsible for synthesis of pseudouridine from uracil-55 in the psi GC loop of transfer RNAs. The chain is tRNA pseudouridine synthase B from Aliivibrio fischeri (strain ATCC 700601 / ES114) (Vibrio fischeri).